Reading from the N-terminus, the 461-residue chain is Ribosomal protein uS12 methylthiotransferase RimO (461 aa).

One can recognise an MTTase N-terminal domain in the interval proline 13–proline 128. [4Fe-4S] cluster-binding residues include cysteine 22, cysteine 58, cysteine 87, cysteine 159, cysteine 163, and cysteine 166. The Radical SAM core domain occupies leucine 145–lysine 390. The TRAM domain maps to alanine 393–valine 461.

It belongs to the methylthiotransferase family. RimO subfamily. The cofactor is [4Fe-4S] cluster.

It is found in the cytoplasm. It carries out the reaction L-aspartate(89)-[ribosomal protein uS12]-hydrogen + (sulfur carrier)-SH + AH2 + 2 S-adenosyl-L-methionine = 3-methylsulfanyl-L-aspartate(89)-[ribosomal protein uS12]-hydrogen + (sulfur carrier)-H + 5'-deoxyadenosine + L-methionine + A + S-adenosyl-L-homocysteine + 2 H(+). Its function is as follows. Catalyzes the methylthiolation of an aspartic acid residue of ribosomal protein uS12. The protein is Ribosomal protein uS12 methylthiotransferase RimO of Paraburkholderia phytofirmans (strain DSM 17436 / LMG 22146 / PsJN) (Burkholderia phytofirmans).